The primary structure comprises 323 residues: Fructokinase-1 (323 aa).

The protein belongs to the carbohydrate kinase PfkB family. As to expression, expressed in root, endosperm and leaf tissues.

It catalyses the reaction D-fructose + ATP = D-fructose 6-phosphate + ADP + H(+). The protein operates within glycan biosynthesis; starch biosynthesis. Completely inhibited at 50 mM ATP, but not inhibited at high fructose concentration. Fructokinase that may play an important role in maintaining the flux of carbon towards starch formation. May also be involved in a sugar-sensing pathway. The sequence is that of Fructokinase-1 from Oryza sativa subsp. japonica (Rice).